The following is a 284-amino-acid chain: Asialoglycoprotein receptor 1 (284 aa).

The span at 1–18 (MTKDYQDFQHLDNDNDHH) shows a compositional bias: basic and acidic residues. The interval 1 to 25 (MTKDYQDFQHLDNDNDHHQLRRGPP) is disordered. The Cytoplasmic portion of the chain corresponds to 1–39 (MTKDYQDFQHLDNDNDHHQLRRGPPPTPRLLQRLCSGSR). The Endocytosis signal motif lies at 5-8 (YQDF). Cys-35 is lipidated: S-palmitoyl cysteine. The chain crosses the membrane as a helical; Signal-anchor for type II membrane protein span at residues 40–60 (LLLLSSSLSILLLVVVCVITS). Residues 59–117 (TSQNSQLREDLLALRQNFSNLTVSTEDQVKALSTQGSSVGRKMKLVESKLEKQQKDLTE) are a coiled coil. Over 61 to 284 (QNSQLREDLL…VCETKLDKAN (224 aa)) the chain is Extracellular. 3 N-linked (GlcNAc...) asparagine glycosylation sites follow: Asn-75, Asn-78, and Asn-146. Disulfide bonds link Cys-153–Cys-164, Cys-181–Cys-276, and Cys-254–Cys-268. The C-type lectin domain occupies 160–277 (YEGSCYWFSS…CRRPYRWVCE (118 aa)). Ca(2+)-binding residues include Val-190, Glu-196, Asp-215, Gln-239, Asp-241, Glu-252, Asp-253, Asn-264, Asp-265, and Glu-277.

As to quaternary structure, interacts with LASS2. Post-translationally, phosphorylated on a cytoplasmic Ser residue. As to expression, expressed exclusively in hepatic parenchymal cells.

It localises to the membrane. In terms of biological role, mediates the endocytosis of plasma glycoproteins to which the terminal sialic acid residue on their complex carbohydrate moieties has been removed. The receptor recognizes terminal galactose and N-acetylgalactosamine units. After ligand binding to the receptor, the resulting complex is internalized and transported to a sorting organelle, where receptor and ligand are disassociated. The receptor then returns to the cell membrane surface. This chain is Asialoglycoprotein receptor 1 (Asgr1), found in Mus musculus (Mouse).